Here is a 299-residue protein sequence, read N- to C-terminus: 4-hydroxybenzoate octaprenyltransferase (299 aa).

Transmembrane regions (helical) follow at residues 34 to 54, 57 to 77, 108 to 128, 163 to 183, 221 to 241, 245 to 265, and 277 to 297; these read IGSL…ADGL, LWTL…GCVI, LWVF…LNWL, WGIP…GWLL, FDLV…ALVD, DLGA…AYEF, and FRAF…IAVA.

The protein belongs to the UbiA prenyltransferase family. Mg(2+) serves as cofactor.

Its subcellular location is the cell inner membrane. The catalysed reaction is all-trans-octaprenyl diphosphate + 4-hydroxybenzoate = 4-hydroxy-3-(all-trans-octaprenyl)benzoate + diphosphate. It participates in cofactor biosynthesis; ubiquinone biosynthesis. In terms of biological role, catalyzes the prenylation of para-hydroxybenzoate (PHB) with an all-trans polyprenyl group. Mediates the second step in the final reaction sequence of ubiquinone-8 (UQ-8) biosynthesis, which is the condensation of the polyisoprenoid side chain with PHB, generating the first membrane-bound Q intermediate 3-octaprenyl-4-hydroxybenzoate. This chain is 4-hydroxybenzoate octaprenyltransferase, found in Xanthomonas oryzae pv. oryzae (strain MAFF 311018).